The following is a 349-amino-acid chain: Heat-inducible transcription repressor HrcA (349 aa).

The protein belongs to the HrcA family.

Its function is as follows. Negative regulator of class I heat shock genes (grpE-dnaK-dnaJ and groELS operons). Prevents heat-shock induction of these operons. The sequence is that of Heat-inducible transcription repressor HrcA from Xylella fastidiosa (strain M23).